The primary structure comprises 506 residues: AMP phosphorylase (506 aa).

Residues Gly-167, 193–198 (SRAITG), and Thr-202 each bind AMP. Asp-255 serves as the catalytic Proton donor. Residues Ser-263 and Lys-287 each coordinate AMP.

Belongs to the thymidine/pyrimidine-nucleoside phosphorylase family. Type 2 subfamily.

It carries out the reaction AMP + phosphate = alpha-D-ribose 1,5-bisphosphate + adenine. The enzyme catalyses CMP + phosphate = cytosine + alpha-D-ribose 1,5-bisphosphate. The catalysed reaction is UMP + phosphate = alpha-D-ribose 1,5-bisphosphate + uracil. Catalyzes the conversion of AMP and phosphate to adenine and ribose 1,5-bisphosphate (R15P). Exhibits phosphorylase activity toward CMP and UMP in addition to AMP. Functions in an archaeal AMP degradation pathway, together with R15P isomerase and RubisCO. The sequence is that of AMP phosphorylase from Methanosarcina acetivorans (strain ATCC 35395 / DSM 2834 / JCM 12185 / C2A).